The chain runs to 557 residues: uncharacterized protein (557 aa).

The Helicase ATP-binding domain occupies 70–224 (KVVEKMNGKA…FNLVSLLKPG (155 aa)). 82 to 90 (ADEVGLGKT) is a binding site for ATP. A DEAH box motif is present at residues 175–178 (DEAH). Residues 363–524 (QVVDLIKKID…NFEEHLHDIL (162 aa)) enclose the Helicase C-terminal domain.

Belongs to the SNF2/RAD54 helicase family.

This is an uncharacterized protein from Bacillus subtilis (strain 168).